Here is a 478-residue protein sequence, read N- to C-terminus: MTLSFITRWRDELPETYTALSPTPLNNARLIWHNTELANTLSIPSSLFKNGAGVWGGENLLPGMSPLAQVYSGHQFGVWAGQLGDGRGILLGEQLLADGTTMDWHLKGAGLTPYSRMGDGRAVLRSTIRESLASEAMHYLGIPTTRALSIVTSDSPVYRETVESGAMLMRVAPSHLRFGHFEHFYYRREPEKVRQLADFAIRHYWSHLDDEEDKYRLWFTDVVARTASLIAQWQTVGFAHGVMNTDNMSLLGLTLDYGPFGFLDDYEPGFICNHSDHQGRYSFDNQPAVALWNLQRLAQTLSPFVAVDALNEALDSYQQVLLTHYGQRMRQKLGFMTEQKEDNALLNELFSLMARERSDYTRTFRMLSLTEQHSAASPLRDEFIDRAAFDDWFARYRGRLQQDEITDSERQQLMQSVNPALVLRNWLAQRAIEAAEKDDMTELHRLHEALRNPFSDRDDDYVSRPPDWGKRLEVSCSS.

8 residues coordinate ATP: Gly-84, Gly-86, Arg-87, Lys-107, Asp-119, Gly-120, Arg-170, and Arg-177. The Proton acceptor role is filled by Asp-246. Residues Asn-247 and Asp-256 each contribute to the Mg(2+) site. Asp-256 contributes to the ATP binding site.

It belongs to the SELO family. The cofactor is Mg(2+). Mn(2+) serves as cofactor.

The enzyme catalyses L-seryl-[protein] + ATP = 3-O-(5'-adenylyl)-L-seryl-[protein] + diphosphate. It carries out the reaction L-threonyl-[protein] + ATP = 3-O-(5'-adenylyl)-L-threonyl-[protein] + diphosphate. It catalyses the reaction L-tyrosyl-[protein] + ATP = O-(5'-adenylyl)-L-tyrosyl-[protein] + diphosphate. The catalysed reaction is L-histidyl-[protein] + UTP = N(tele)-(5'-uridylyl)-L-histidyl-[protein] + diphosphate. The enzyme catalyses L-seryl-[protein] + UTP = O-(5'-uridylyl)-L-seryl-[protein] + diphosphate. It carries out the reaction L-tyrosyl-[protein] + UTP = O-(5'-uridylyl)-L-tyrosyl-[protein] + diphosphate. Functionally, nucleotidyltransferase involved in the post-translational modification of proteins. It can catalyze the addition of adenosine monophosphate (AMP) or uridine monophosphate (UMP) to a protein, resulting in modifications known as AMPylation and UMPylation. This chain is Protein nucleotidyltransferase YdiU, found in Escherichia coli O1:K1 / APEC.